The primary structure comprises 288 residues: ATP phosphoribosyltransferase (288 aa).

Belongs to the ATP phosphoribosyltransferase family. Long subfamily. Requires Mg(2+) as cofactor.

The protein localises to the cytoplasm. The enzyme catalyses 1-(5-phospho-beta-D-ribosyl)-ATP + diphosphate = 5-phospho-alpha-D-ribose 1-diphosphate + ATP. The protein operates within amino-acid biosynthesis; L-histidine biosynthesis; L-histidine from 5-phospho-alpha-D-ribose 1-diphosphate: step 1/9. Its activity is regulated as follows. Feedback inhibited by histidine. Functionally, catalyzes the condensation of ATP and 5-phosphoribose 1-diphosphate to form N'-(5'-phosphoribosyl)-ATP (PR-ATP). Has a crucial role in the pathway because the rate of histidine biosynthesis seems to be controlled primarily by regulation of HisG enzymatic activity. In Methanocaldococcus jannaschii (strain ATCC 43067 / DSM 2661 / JAL-1 / JCM 10045 / NBRC 100440) (Methanococcus jannaschii), this protein is ATP phosphoribosyltransferase (hisG).